A 159-amino-acid chain; its full sequence is Ribosomal RNA large subunit methyltransferase H (159 aa).

S-adenosyl-L-methionine is bound by residues Leu-76, Gly-108, and 127–132 (FSKMTF).

It belongs to the RNA methyltransferase RlmH family. Homodimer.

The protein resides in the cytoplasm. It catalyses the reaction pseudouridine(1915) in 23S rRNA + S-adenosyl-L-methionine = N(3)-methylpseudouridine(1915) in 23S rRNA + S-adenosyl-L-homocysteine + H(+). Functionally, specifically methylates the pseudouridine at position 1915 (m3Psi1915) in 23S rRNA. This chain is Ribosomal RNA large subunit methyltransferase H, found in Clostridium botulinum (strain Eklund 17B / Type B).